The following is a 198-amino-acid chain: Pyridoxal 5'-phosphate synthase subunit PdxT (198 aa).

Residue 52–54 (GES) coordinates L-glutamine. The active-site Nucleophile is the cysteine 84. L-glutamine-binding positions include arginine 115 and 142-143 (IR). Catalysis depends on charge relay system residues histidine 178 and glutamate 180.

This sequence belongs to the glutaminase PdxT/SNO family. In terms of assembly, in the presence of PdxS, forms a dodecamer of heterodimers. Only shows activity in the heterodimer.

The catalysed reaction is aldehydo-D-ribose 5-phosphate + D-glyceraldehyde 3-phosphate + L-glutamine = pyridoxal 5'-phosphate + L-glutamate + phosphate + 3 H2O + H(+). It carries out the reaction L-glutamine + H2O = L-glutamate + NH4(+). It functions in the pathway cofactor biosynthesis; pyridoxal 5'-phosphate biosynthesis. In terms of biological role, catalyzes the hydrolysis of glutamine to glutamate and ammonia as part of the biosynthesis of pyridoxal 5'-phosphate. The resulting ammonia molecule is channeled to the active site of PdxS. This is Pyridoxal 5'-phosphate synthase subunit PdxT from Archaeoglobus fulgidus (strain ATCC 49558 / DSM 4304 / JCM 9628 / NBRC 100126 / VC-16).